Here is a 317-residue protein sequence, read N- to C-terminus: Ribosomal protein L11 methyltransferase (317 aa).

Residues Thr158, Gly179, Asp201, and Asn244 each contribute to the S-adenosyl-L-methionine site.

Belongs to the methyltransferase superfamily. PrmA family.

The protein localises to the cytoplasm. It carries out the reaction L-lysyl-[protein] + 3 S-adenosyl-L-methionine = N(6),N(6),N(6)-trimethyl-L-lysyl-[protein] + 3 S-adenosyl-L-homocysteine + 3 H(+). In terms of biological role, methylates ribosomal protein L11. This is Ribosomal protein L11 methyltransferase from Streptococcus pyogenes serotype M4 (strain MGAS10750).